The primary structure comprises 119 residues: Ribonuclease P protein component (119 aa).

The protein belongs to the RnpA family. As to quaternary structure, consists of a catalytic RNA component (M1 or rnpB) and a protein subunit.

The enzyme catalyses Endonucleolytic cleavage of RNA, removing 5'-extranucleotides from tRNA precursor.. Functionally, RNaseP catalyzes the removal of the 5'-leader sequence from pre-tRNA to produce the mature 5'-terminus. It can also cleave other RNA substrates such as 4.5S RNA. The protein component plays an auxiliary but essential role in vivo by binding to the 5'-leader sequence and broadening the substrate specificity of the ribozyme. The polypeptide is Ribonuclease P protein component (Aromatoleum aromaticum (strain DSM 19018 / LMG 30748 / EbN1) (Azoarcus sp. (strain EbN1))).